Here is a 408-residue protein sequence, read N- to C-terminus: MAVEKTVPGGVRTVLVTGGAGYIGSHAVLQLLLAGFRAVVVDNLNNSSELAVRRVAALAGDHSRNLAFHKVDLRDKGALEKVFASTRFDAVVHFAGLKAVGESVQKPLLYYDNNVNGTVNLLEVMSAHGCKKLVFSSSAAVYGSPKNSPCTEEFPLTPNNPYGKTKLVVEDICRDIYRTDPEWKIILLRYFNPVGAHPSGYLGEDPCGIPNNLMPYVQQVAVGRRPALTILGNDYATRDGTGVRDYIHVVDLADGHIAALQKLFESSSIGCEAYNLGTGKGTSVLEIVKAFEKASGKKIPLIIGPRRPGDAEILFSLPAKAEKELNWKAKFGIDEMCRDQWNWASKNPYGYGSLDSTKQNGHHSYGSIGSPKQNGHCTNGFSESTRHNGHNGYGLVDSAKHNGNGHFH.

13-44 (TVLVTGGAGYIGSHAVLQLLLAGFRAVVVDNL) lines the NAD(+) pocket. Ser-138 contacts substrate. The Proton acceptor role is filled by Tyr-162. The segment at 369 to 408 (GSPKQNGHCTNGFSESTRHNGHNGYGLVDSAKHNGNGHFH) is disordered. Residues 370–383 (SPKQNGHCTNGFSE) show a composition bias toward polar residues.

Belongs to the NAD(P)-dependent epimerase/dehydratase family. NAD(+) serves as cofactor.

The enzyme catalyses UDP-alpha-D-glucose = UDP-alpha-D-galactose. It participates in carbohydrate metabolism; galactose metabolism. Its function is as follows. Catalyzes the interconversion between UDP-glucose and UDP-galactose. This chain is UDP-glucose 4-epimerase 2 (UGE-2), found in Oryza sativa subsp. japonica (Rice).